We begin with the raw amino-acid sequence, 362 residues long: Putative lipoprotein YdaJ (362 aa).

An N-terminal signal peptide occupies residues 1-20; sequence MRHVLIAVILFFLSIGLSAG. Cysteine 21 carries the N-palmitoyl cysteine lipid modification. Cysteine 21 carries S-diacylglycerol cysteine lipidation.

It is found in the cell membrane. The sequence is that of Putative lipoprotein YdaJ (ydaJ) from Bacillus subtilis (strain 168).